The sequence spans 242 residues: MSGFFITATDTEVGKTVVAGAIAGVFRELGYNVGVYKPLQSGHVASNPEGDAARLKSLSGVPTQENEICPYSIEEPLAPRLAMKRAGRVVKLKEITDYYNGLLKEFNSLFVEGAGGLAVPYTEDALVIDFAKELQLPLIVVARPTLGTVNHTVLTIAYAKAHGLTVAGVILSGCKECEMERVKENKEMIEELSGVPVLGLLPFFAGEFTKEEVLESAKEHIMISKLEEFIQNESNVAGAPSM.

Residue 12-17 (EVGKTV) coordinates ATP. T16 serves as a coordination point for Mg(2+). Residue K37 is part of the active site. A substrate-binding site is contributed by S41. Residues D51 and 112–115 (EGAG) each bind ATP. Mg(2+) is bound by residues D51 and E112.

It belongs to the dethiobiotin synthetase family. In terms of assembly, homodimer. Mg(2+) serves as cofactor.

It is found in the cytoplasm. It carries out the reaction (7R,8S)-7,8-diammoniononanoate + CO2 + ATP = (4R,5S)-dethiobiotin + ADP + phosphate + 3 H(+). It functions in the pathway cofactor biosynthesis; biotin biosynthesis; biotin from 7,8-diaminononanoate: step 1/2. Catalyzes a mechanistically unusual reaction, the ATP-dependent insertion of CO2 between the N7 and N8 nitrogen atoms of 7,8-diaminopelargonic acid (DAPA, also called 7,8-diammoniononanoate) to form a ureido ring. The polypeptide is ATP-dependent dethiobiotin synthetase BioD (Bacillus cereus (strain B4264)).